The chain runs to 105 residues: Thioredoxin (105 aa).

Residues 2–105 form the Thioredoxin domain; that stretch reads VKLIESKEAF…KLEASITEYA (104 aa). An N6-acetyllysine modification is found at K3. K8 bears the N6-succinyllysine mark. Residues C32 and C35 each act as nucleophile in the active site. A disulfide bond links C32 and C35. At K39 the chain carries N6-acetyllysine. C62 and C69 each carry S-nitrosocysteine. At C73 the chain carries S-nitrosocysteine; alternate. An N6-acetyllysine; alternate modification is found at K94. K94 carries the N6-succinyllysine; alternate modification.

Belongs to the thioredoxin family. Homodimer; disulfide-linked. Interacts with TXNIP through the redox-active site. Interacts with MAP3K5 and CASP3. Interacts with APEX1; the interaction stimulates the FOS/JUN AP-1 DNA-binding activity in a redox-dependent manner. In terms of processing, in the fully reduced protein, both Cys-69 and Cys-73 are nitrosylated in response to nitric oxide (NO). When two disulfide bonds are present in the protein, only Cys-73 is nitrosylated. Cys-73 can serve as donor for nitrosylation of target proteins.

Its subcellular location is the nucleus. It is found in the cytoplasm. The protein localises to the secreted. Participates in various redox reactions through the reversible oxidation of its active center dithiol to a disulfide and catalyzes dithiol-disulfide exchange reactions. Plays a role in the reversible S-nitrosylation of cysteine residues in target proteins, and thereby contributes to the response to intracellular nitric oxide. Nitrosylates the active site Cys of CASP3 in response to nitric oxide (NO), and thereby inhibits caspase-3 activity. Induces the FOS/JUN AP-1 DNA binding activity in ionizing radiation (IR) cells through its oxidation/reduction status and stimulates AP-1 transcriptional activity. Functionally, ADF augments the expression of the interleukin-2 receptor TAC (IL2R/P55). The polypeptide is Thioredoxin (Txn) (Mus musculus (Mouse)).